A 32-amino-acid chain; its full sequence is MSDIN-like toxin proprotein 11 (32 aa).

Residues 1-10 (MSDINATRLP) constitute a propeptide that is removed on maturation. The tract at residues 1-32 (MSDINATRLPGMEPPSPMPCVGDADNFTLTRG) is disordered. The cyclopeptide (Gly-Pro) cross-link spans 11-19 (GMEPPSPMP). Positions 20-32 (CVGDADNFTLTRG) are excised as a propeptide.

It belongs to the MSDIN fungal toxin family. Post-translationally, processed by the macrocyclase-peptidase enzyme POPB to yield a toxic cyclic nonapeptide. POPB first removes 10 residues from the N-terminus. Conformational trapping of the remaining peptide forces the enzyme to release this intermediate rather than proceed to macrocyclization. The enzyme rebinds the remaining peptide in a different conformation and catalyzes macrocyclization of the N-terminal 9 residues.

Its function is as follows. Probable toxin that belongs to the MSDIN-like toxin family responsible for a large number of food poisoning cases and deaths. This Amanita bisporigera (Destroying angel) protein is MSDIN-like toxin proprotein 11.